Consider the following 450-residue polypeptide: Tubulin alpha chain (450 aa).

Gln11 contributes to the GTP binding site. Position 40 is an N6-acetyllysine (Lys40). GTP is bound by residues Glu71, Ser140, Gly144, Thr145, Thr179, Asn206, and Asn228. Position 71 (Glu71) interacts with Mg(2+). Residue Glu254 is part of the active site.

The protein belongs to the tubulin family. As to quaternary structure, dimer of alpha and beta chains. A typical microtubule is a hollow water-filled tube with an outer diameter of 25 nm and an inner diameter of 15 nM. Alpha-beta heterodimers associate head-to-tail to form protofilaments running lengthwise along the microtubule wall with the beta-tubulin subunit facing the microtubule plus end conferring a structural polarity. Microtubules usually have 13 protofilaments but different protofilament numbers can be found in some organisms and specialized cells. Mg(2+) is required as a cofactor. Undergoes a tyrosination/detyrosination cycle, the cyclic removal and re-addition of a C-terminal tyrosine residue by the enzymes tubulin tyrosine carboxypeptidase (TTCP) and tubulin tyrosine ligase (TTL), respectively. Post-translationally, acetylation of alpha chains at Lys-40 stabilizes microtubules and affects affinity and processivity of microtubule motors. This modification has a role in multiple cellular functions, ranging from cell motility, cell cycle progression or cell differentiation to intracellular trafficking and signaling.

The protein resides in the cytoplasm. The protein localises to the cytoskeleton. The catalysed reaction is GTP + H2O = GDP + phosphate + H(+). Its function is as follows. Tubulin is the major constituent of microtubules, a cylinder consisting of laterally associated linear protofilaments composed of alpha- and beta-tubulin heterodimers. Microtubules grow by the addition of GTP-tubulin dimers to the microtubule end, where a stabilizing cap forms. Below the cap, tubulin dimers are in GDP-bound state, owing to GTPase activity of alpha-tubulin. This chain is Tubulin alpha chain, found in Lepidoglyphus destructor (Storage mite).